A 59-amino-acid polypeptide reads, in one-letter code: Large ribosomal subunit protein uL30 (59 aa).

The protein belongs to the universal ribosomal protein uL30 family. Part of the 50S ribosomal subunit.

This is Large ribosomal subunit protein uL30 from Shewanella amazonensis (strain ATCC BAA-1098 / SB2B).